Here is a 264-residue protein sequence, read N- to C-terminus: Thymidylate synthase (264 aa).

Arginine 21 contacts dUMP. Histidine 51 provides a ligand contact to (6R)-5,10-methylene-5,6,7,8-tetrahydrofolate. 126–127 (RR) serves as a coordination point for dUMP. The active-site Nucleophile is the cysteine 146. Residues 166–169 (RSAD), asparagine 177, and 207–209 (HLY) contribute to the dUMP site. Position 169 (aspartate 169) interacts with (6R)-5,10-methylene-5,6,7,8-tetrahydrofolate. Position 263 (alanine 263) interacts with (6R)-5,10-methylene-5,6,7,8-tetrahydrofolate.

It belongs to the thymidylate synthase family. Bacterial-type ThyA subfamily. As to quaternary structure, homodimer.

Its subcellular location is the cytoplasm. It carries out the reaction dUMP + (6R)-5,10-methylene-5,6,7,8-tetrahydrofolate = 7,8-dihydrofolate + dTMP. The protein operates within pyrimidine metabolism; dTTP biosynthesis. Its function is as follows. Catalyzes the reductive methylation of 2'-deoxyuridine-5'-monophosphate (dUMP) to 2'-deoxythymidine-5'-monophosphate (dTMP) while utilizing 5,10-methylenetetrahydrofolate (mTHF) as the methyl donor and reductant in the reaction, yielding dihydrofolate (DHF) as a by-product. This enzymatic reaction provides an intracellular de novo source of dTMP, an essential precursor for DNA biosynthesis. The polypeptide is Thymidylate synthase (Bartonella quintana (strain Toulouse) (Rochalimaea quintana)).